Consider the following 622-residue polypeptide: 1,4-alpha-glucan branching enzyme GlgB (622 aa).

Catalysis depends on Asp-306, which acts as the Nucleophile. The active-site Proton donor is Glu-358. A disordered region spans residues 581–606 (YGGSNVGNRGAVHSDPVEKHGHSHSL).

The protein belongs to the glycosyl hydrolase 13 family. GlgB subfamily. In terms of assembly, monomer.

It carries out the reaction Transfers a segment of a (1-&gt;4)-alpha-D-glucan chain to a primary hydroxy group in a similar glucan chain.. Its pathway is glycan biosynthesis; glycogen biosynthesis. Catalyzes the formation of the alpha-1,6-glucosidic linkages in glycogen by scission of a 1,4-alpha-linked oligosaccharide from growing alpha-1,4-glucan chains and the subsequent attachment of the oligosaccharide to the alpha-1,6 position. In Salinibacter ruber (strain DSM 13855 / M31), this protein is 1,4-alpha-glucan branching enzyme GlgB.